The chain runs to 152 residues: Deoxyuridine 5'-triphosphate nucleotidohydrolase (152 aa).

Substrate contacts are provided by residues arginine 71–glycine 73, asparagine 84, leucine 88–aspartate 90, and methionine 98.

Belongs to the dUTPase family. The cofactor is Mg(2+).

It catalyses the reaction dUTP + H2O = dUMP + diphosphate + H(+). It participates in pyrimidine metabolism; dUMP biosynthesis; dUMP from dCTP (dUTP route): step 2/2. In terms of biological role, this enzyme is involved in nucleotide metabolism: it produces dUMP, the immediate precursor of thymidine nucleotides and it decreases the intracellular concentration of dUTP so that uracil cannot be incorporated into DNA. In Shewanella putrefaciens (strain CN-32 / ATCC BAA-453), this protein is Deoxyuridine 5'-triphosphate nucleotidohydrolase.